A 291-amino-acid chain; its full sequence is Pantothenate synthetase (291 aa).

ATP is bound at residue Met-30–His-37. His-37 serves as the catalytic Proton donor. Gln-61 serves as a coordination point for (R)-pantoate. Gln-61 lines the beta-alanine pocket. An ATP-binding site is contributed by Gly-147–Asp-150. Gln-153 contributes to the (R)-pantoate binding site. Residues Val-176 and Cys-184–Arg-187 each bind ATP.

This sequence belongs to the pantothenate synthetase family. As to quaternary structure, homodimer.

It is found in the cytoplasm. The enzyme catalyses (R)-pantoate + beta-alanine + ATP = (R)-pantothenate + AMP + diphosphate + H(+). The protein operates within cofactor biosynthesis; (R)-pantothenate biosynthesis; (R)-pantothenate from (R)-pantoate and beta-alanine: step 1/1. Functionally, catalyzes the condensation of pantoate with beta-alanine in an ATP-dependent reaction via a pantoyl-adenylate intermediate. This is Pantothenate synthetase from Rhizobium meliloti (strain 1021) (Ensifer meliloti).